The sequence spans 371 residues: Aspartate-semialdehyde dehydrogenase (371 aa).

Residues 9-12 (RGMV), 37-38 (TS), and Q73 each bind NADP(+). Residue R102 coordinates phosphate. The Acyl-thioester intermediate role is filled by C135. Q162 contributes to the substrate binding site. NADP(+)-binding positions include 165–166 (SG) and P193. Substrate is bound at residue E241. Residue K244 participates in phosphate binding. A substrate-binding site is contributed by R268. The Proton acceptor role is filled by H275. Q351 is an NADP(+) binding site.

The protein belongs to the aspartate-semialdehyde dehydrogenase family. In terms of assembly, homodimer.

It catalyses the reaction L-aspartate 4-semialdehyde + phosphate + NADP(+) = 4-phospho-L-aspartate + NADPH + H(+). The protein operates within amino-acid biosynthesis; L-lysine biosynthesis via DAP pathway; (S)-tetrahydrodipicolinate from L-aspartate: step 2/4. It participates in amino-acid biosynthesis; L-methionine biosynthesis via de novo pathway; L-homoserine from L-aspartate: step 2/3. Its pathway is amino-acid biosynthesis; L-threonine biosynthesis; L-threonine from L-aspartate: step 2/5. Functionally, catalyzes the NADPH-dependent formation of L-aspartate-semialdehyde (L-ASA) by the reductive dephosphorylation of L-aspartyl-4-phosphate. This is Aspartate-semialdehyde dehydrogenase from Neisseria meningitidis serogroup B (strain ATCC BAA-335 / MC58).